The following is a 95-amino-acid chain: Large ribosomal subunit protein eL37y (95 aa).

C19, C22, C34, and C37 together coordinate Zn(2+). A C4-type zinc finger spans residues 19–37; that stretch reads CVRCGRRSFHIQKSRCSAC.

This sequence belongs to the eukaryotic ribosomal protein eL37 family. Requires Zn(2+) as cofactor.

Binds to the 23S rRNA. The chain is Large ribosomal subunit protein eL37y (RPL37B) from Arabidopsis thaliana (Mouse-ear cress).